The sequence spans 230 residues: Iron-dependent repressor IdeR (230 aa).

Residues 4 to 65 form the HTH dtxR-type domain; the sequence is LVDTTEMYLR…VAGNRHLELT (62 aa).

The protein belongs to the DtxR/MntR family. In terms of assembly, homodimer.

It is found in the cytoplasm. Its function is as follows. Metal-dependent DNA-binding protein that controls transcription of many genes involved in iron metabolism. This Mycobacterium leprae (strain TN) protein is Iron-dependent repressor IdeR (ideR).